The chain runs to 94 residues: Co-chaperonin GroES (94 aa).

It belongs to the GroES chaperonin family. In terms of assembly, heptamer of 7 subunits arranged in a ring. Interacts with the chaperonin GroEL.

Its subcellular location is the cytoplasm. Its function is as follows. Together with the chaperonin GroEL, plays an essential role in assisting protein folding. The GroEL-GroES system forms a nano-cage that allows encapsulation of the non-native substrate proteins and provides a physical environment optimized to promote and accelerate protein folding. GroES binds to the apical surface of the GroEL ring, thereby capping the opening of the GroEL channel. The protein is Co-chaperonin GroES of Clostridium novyi (strain NT).